Consider the following 133-residue polypeptide: Hexon-interlacing protein (133 aa).

Residues R97–N127 are a coiled coil.

This sequence belongs to the adenoviridae hexon-interlacing protein family. Homotrimer. Interacts with hexon protein; this interaction tethers the hexons together. Self-interacts with adjacent proteins. Interacts with kinesin light chain KLC1; this interaction leads to capsid disruption at the nuclear pore complex during virus entry into host cell.

It is found in the virion. It localises to the host nucleus. In terms of biological role, structural component of the virion that acts as a cement protein on the capsid exterior and forms triskelion structures consisting of three molecules that stabilize three hexon trimers at the center of each icosahedral facet and fixes the peripentonal hexons. Dispensable for assembly. During virus entry, recruits the anterograde motor kinesin-1 to the capsid docked at the nuclear pore complex thereby subjecting the docked capsid to a pulling force. The resulting tension leads to capsid disruption, dispersion of capsid fragments toward cell periphery and eventually viral DNA entry into the host nucleus. This is Hexon-interlacing protein from Homo sapiens (Human).